Consider the following 337-residue polypeptide: Phenylalanine--tRNA ligase alpha subunit (337 aa).

Glutamate 252 provides a ligand contact to Mg(2+).

Belongs to the class-II aminoacyl-tRNA synthetase family. Phe-tRNA synthetase alpha subunit type 1 subfamily. As to quaternary structure, tetramer of two alpha and two beta subunits. Mg(2+) is required as a cofactor.

The protein localises to the cytoplasm. The catalysed reaction is tRNA(Phe) + L-phenylalanine + ATP = L-phenylalanyl-tRNA(Phe) + AMP + diphosphate + H(+). The sequence is that of Phenylalanine--tRNA ligase alpha subunit from Francisella tularensis subsp. tularensis (strain SCHU S4 / Schu 4).